Consider the following 92-residue polypeptide: Small ribosomal subunit protein uS19c (92 aa).

The protein belongs to the universal ribosomal protein uS19 family.

It localises to the plastid. The protein resides in the chloroplast. Protein S19 forms a complex with S13 that binds strongly to the 16S ribosomal RNA. This is Small ribosomal subunit protein uS19c from Morus indica (Mulberry).